The chain runs to 77 residues: MKTSVLLVILGIAAITVQCTASESVEQDSLRTFVDAVLGWNAEMASEARCGGWMAKCADSDDCCETFHCTRFNVCGK.

The signal sequence occupies residues 1–21; sequence MKTSVLLVILGIAAITVQCTA. A propeptide spanning residues 22-49 is cleaved from the precursor; that stretch reads SESVEQDSLRTFVDAVLGWNAEMASEAR. 3 cysteine pairs are disulfide-bonded: Cys50–Cys64, Cys57–Cys69, and Cys63–Cys75. The residue at position 77 (Lys77) is a Lysine amide.

The protein belongs to the neurotoxin 10 (Hwtx-1) family. 65 (Jztx-21) subfamily. Expressed by the venom gland.

The protein resides in the secreted. In terms of biological role, probable ion channel inhibitor. This Chilobrachys guangxiensis (Chinese earth tiger tarantula) protein is U14-theraphotoxin-Cg1a 1.